The primary structure comprises 735 residues: DNA replication licensing factor mcm5-A (735 aa).

An MCM domain is found at isoleucine 332–methionine 538. Position 372 (arginine 372) interacts with ADP. The Arginine finger signature appears at serine 513–aspartate 516.

This sequence belongs to the MCM family. Component of the mcm2-7 complex (RLF-M). The complex forms a toroidal hexameric ring with the proposed subunit order mcm2-mcm6-mcm4-mcm7-mcm3-mcm5. The heterodimer of mmcm3/mcm5 interacts with mcm4, mmcm6, mcm7 and weakly with mcm2. Component of the CMG helicase complex, composed of the mcm2-7 complex, the GINS complex and cdc45.

It localises to the nucleus. The protein resides in the chromosome. The enzyme catalyses ATP + H2O = ADP + phosphate + H(+). Its function is as follows. Acts as a component of the MCM2-7 complex (MCM complex) which is the replicative helicase essential for 'once per cell cycle' DNA replication initiation and elongation in eukaryotic cells. Core component of CDC45-MCM-GINS (CMG) helicase, the molecular machine that unwinds template DNA during replication, and around which the replisome is built. The active ATPase sites in the MCM2-7 ring are formed through the interaction surfaces of two neighboring subunits such that a critical structure of a conserved arginine finger motif is provided in trans relative to the ATP-binding site of the Walker A box of the adjacent subunit. The six ATPase active sites, however, are likely to contribute differentially to the complex helicase activity. This is DNA replication licensing factor mcm5-A (mcm5-a) from Xenopus laevis (African clawed frog).